We begin with the raw amino-acid sequence, 546 residues long: Zinc metalloproteinase nas-9 (546 aa).

A signal peptide spans 1 to 14 (MIFLLFVVFPFVYA). A propeptide spanning residues 15-300 (QLLPELLAGF…GGGGGGRVPR (286 aa)) is cleaved from the precursor. Residue N248 is glycosylated (N-linked (GlcNAc...) asparagine). A Peptidase M12A domain is found at 308-507 (SAVQKWDIWK…IRLLKKMYCR (200 aa)). Cystine bridges form between C347/C506, C372/C392, C510/C546, C517/C539, and C526/C543. H401 contributes to the Zn(2+) binding site. The active site involves E402. Residues H405 and H411 each coordinate Zn(2+). The ShKT domain maps to 510-546 (CDDQNVHCGTWALHGYCKMKEQMKWMNENCKASCDKC).

Requires Zn(2+) as cofactor. As to expression, expressed in hypodermis, uterus and spermatheca.

It localises to the secreted. Metalloprotease. The sequence is that of Zinc metalloproteinase nas-9 (nas-9) from Caenorhabditis elegans.